Here is a 236-residue protein sequence, read N- to C-terminus: Phosphoribosylaminoimidazole-succinocarboxamide synthase (236 aa).

Belongs to the SAICAR synthetase family.

It catalyses the reaction 5-amino-1-(5-phospho-D-ribosyl)imidazole-4-carboxylate + L-aspartate + ATP = (2S)-2-[5-amino-1-(5-phospho-beta-D-ribosyl)imidazole-4-carboxamido]succinate + ADP + phosphate + 2 H(+). Its pathway is purine metabolism; IMP biosynthesis via de novo pathway; 5-amino-1-(5-phospho-D-ribosyl)imidazole-4-carboxamide from 5-amino-1-(5-phospho-D-ribosyl)imidazole-4-carboxylate: step 1/2. The chain is Phosphoribosylaminoimidazole-succinocarboxamide synthase from Pelodictyon phaeoclathratiforme (strain DSM 5477 / BU-1).